We begin with the raw amino-acid sequence, 300 residues long: MKIQCAIIGSGNIGTDLMAKLQRSPVLEPAWMVGIDPDSDGLARARAAGLKTTHEGVDGLLPHIEGDGVRIAFDATSAYVHAENDRKLQEKGVMVIDLTPAAIGPFCVPPVNLKDRIGDGATNVNMVTCGGQATVPIVAAVSQVQPVDYAEIVATISSRSAGPGTRKNIDEFTRTTSRAIEQVGGAKQGKAIIILNPAEPPLIMRDTVHCLVQGKPDHKAITESIERMVAEVQRYVPGYRIKNGPTFDGQRVSTFLEVEGLGDYLPHYSGNLDIMTAAAARAAEIFAESLQSASDAPATA.

10–13 (SGNI) provides a ligand contact to NAD(+). Cys-129 serves as the catalytic Acyl-thioester intermediate. Residues 160 to 168 (SAGPGTRKN) and Asn-271 contribute to the NAD(+) site.

The protein belongs to the acetaldehyde dehydrogenase family.

It carries out the reaction acetaldehyde + NAD(+) + CoA = acetyl-CoA + NADH + H(+). The protein is Acetaldehyde dehydrogenase of Alkalilimnicola ehrlichii (strain ATCC BAA-1101 / DSM 17681 / MLHE-1).